Here is a 2184-residue protein sequence, read N- to C-terminus: Genome polyprotein (2184 aa).

Residue glycine 2 is the site of N-myristoyl glycine; by host attachment. Residues 2-1494 (GAQVSTQKTG…HVSRAFICLQ (1493 aa)) lie on the Cytoplasmic side of the membrane. Positions 566 to 582 (FYQSPVEGAIERAIARV) are amphipathic alpha-helix. Residues histidine 871 and aspartate 889 each act as for protease 2A activity in the active site. Zn(2+)-binding residues include cysteine 906 and cysteine 908. Cysteine 960 functions as the For protease 2A activity in the catalytic mechanism. Zn(2+) is bound by residues cysteine 966 and histidine 968. The interval 1100–1172 (SNGWLKKFTE…EQSAPSQSDQ (73 aa)) is membrane-binding. Residues 1100–1238 (SNGWLKKFTE…SPGAGKSVAT (139 aa)) are oligomerization. The interval 1121–1125 (AIKIQ) is RNA-binding. The 157-residue stretch at 1204–1360 (EKKMSNYIQF…SMYSQNGKIN (157 aa)) folds into the SF3 helicase domain. Positions 1368, 1380, and 1385 each coordinate Zn(2+). The C4-type; degenerate zinc finger occupies 1368-1385 (CDEECCPVNFKKCCPLVC). The interval 1412-1419 (EYNHRHSV) is RNA-binding. Positions 1423–1428 (LEALFQ) are oligomerization. An intramembrane segment occupies 1495–1510 (ALTTFVSVAGIIYIIY). Residues 1511–2184 (KLFAGFQGAY…TLRRKWLDSF (674 aa)) lie on the Cytoplasmic side of the membrane. O-(5'-phospho-RNA)-tyrosine is present on tyrosine 1520. Positions 1540-1718 (GPAFEFAVAM…FSAALLKHYF (179 aa)) constitute a Peptidase C3 domain. Catalysis depends on for protease 3C activity residues histidine 1579, glutamate 1610, and cysteine 1686. Positions 1949 to 2065 (GHLIAFDYSG…SYPWPIDASL (117 aa)) constitute a RdRp catalytic domain. Positions 1955 and 2051 each coordinate Mg(2+).

It belongs to the picornaviruses polyprotein family. Interacts with capsid protein VP1 and capsid protein VP3 to form heterotrimeric protomers. As to quaternary structure, interacts with capsid protein VP0, and capsid protein VP3 to form heterotrimeric protomers. Five protomers subsequently associate to form pentamers which serve as building blocks for the capsid. Interacts with capsid protein VP2, capsid protein VP3 and capsid protein VP4 following cleavage of capsid protein VP0. Interacts with host CXADR. In terms of assembly, interacts with capsid protein VP1 and capsid protein VP3 in the mature capsid. Interacts with capsid protein VP0 and capsid protein VP1 to form heterotrimeric protomers. Five protomers subsequently associate to form pentamers which serve as building blocks for the capsid. Interacts with capsid protein VP4 in the mature capsid. Interacts with protein 2C; this interaction may be important for virion morphogenesis. As to quaternary structure, interacts with capsid protein VP1 and capsid protein VP3. In terms of assembly, homodimer. Homohexamer; forms a hexameric ring structure with 6-fold symmetry characteristic of AAA+ ATPases. Interacts (via N-terminus) with host RTN3 (via reticulon domain); this interaction is important for viral replication. Interacts with capsid protein VP3; this interaction may be important for virion morphogenesis. As to quaternary structure, interacts with protein 3CD. In terms of assembly, homodimer. Interacts with host GBF1. Interacts (via GOLD domain) with host ACBD3 (via GOLD domain); this interaction allows the formation of a viral protein 3A/ACBD3 heterotetramer with a 2:2 stoichiometry, which will stimulate the recruitment of host PI4KB in order to synthesize PI4P at the viral RNA replication sites. Interacts with RNA-directed RNA polymerase. As to quaternary structure, interacts with protein 3AB and with RNA-directed RNA polymerase. In terms of assembly, interacts with Viral protein genome-linked and with protein 3CD. Mg(2+) serves as cofactor. In terms of processing, specific enzymatic cleavages in vivo by the viral proteases yield processing intermediates and the mature proteins. Post-translationally, myristoylation is required for the formation of pentamers during virus assembly. Further assembly of 12 pentamers and a molecule of genomic RNA generates the provirion. During virion maturation, immature virions are rendered infectious following cleavage of VP0 into VP4 and VP2. This maturation seems to be an autocatalytic event triggered by the presence of RNA in the capsid and it is followed by a conformational change infectious virion. In terms of processing, myristoylation is required during RNA encapsidation and formation of the mature virus particle. Post-translationally, VPg is uridylylated by the polymerase into VPg-pUpU. This acts as a nucleotide-peptide primer for the genomic RNA replication.

It localises to the virion. The protein localises to the host cytoplasm. Its subcellular location is the host cytoplasmic vesicle membrane. It is found in the host nucleus. It carries out the reaction a ribonucleoside 5'-triphosphate + H2O = a ribonucleoside 5'-diphosphate + phosphate + H(+). The catalysed reaction is Selective cleavage of Tyr-|-Gly bond in the picornavirus polyprotein.. It catalyses the reaction RNA(n) + a ribonucleoside 5'-triphosphate = RNA(n+1) + diphosphate. The enzyme catalyses Selective cleavage of Gln-|-Gly bond in the poliovirus polyprotein. In other picornavirus reactions Glu may be substituted for Gln, and Ser or Thr for Gly.. With respect to regulation, replication or transcription is subject to high level of random mutations by the nucleotide analog ribavirin. Functionally, forms an icosahedral capsid of pseudo T=3 symmetry with capsid proteins VP2 and VP3. The capsid is 300 Angstroms in diameter, composed of 60 copies of each capsid protein and enclosing the viral positive strand RNA genome. Capsid protein VP1 mainly forms the vertices of the capsid. Capsid protein VP1 interacts with host CXADR to provide virion attachment to target host cells. This attachment induces virion internalization. Tyrosine kinases are probably involved in the entry process. After binding to its receptor, the capsid undergoes conformational changes. Capsid protein VP1 N-terminus (that contains an amphipathic alpha-helix) and capsid protein VP4 are externalized. Together, they shape a pore in the host membrane through which viral genome is translocated to host cell cytoplasm. In terms of biological role, forms an icosahedral capsid of pseudo T=3 symmetry with capsid proteins VP2 and VP3. The capsid is 300 Angstroms in diameter, composed of 60 copies of each capsid protein and enclosing the viral positive strand RNA genome. Lies on the inner surface of the capsid shell. After binding to the host receptor, the capsid undergoes conformational changes. Capsid protein VP4 is released, Capsid protein VP1 N-terminus is externalized, and together, they shape a pore in the host membrane through which the viral genome is translocated into the host cell cytoplasm. Its function is as follows. Component of immature procapsids, which is cleaved into capsid proteins VP4 and VP2 after maturation. Allows the capsid to remain inactive before the maturation step. Functionally, cysteine protease that cleaves viral polyprotein and specific host proteins. It is responsible for the autocatalytic cleavage between the P1 and P2 regions, which is the first cleavage occurring in the polyprotein. Also cleaves the host translation initiation factor EIF4G1, in order to shut down the capped cellular mRNA translation. Inhibits the host nucleus-cytoplasm protein and RNA trafficking by cleaving host members of the nuclear pores. Counteracts stress granule formation probably by antagonizing its assembly or promoting its dissassembly. Cleaves and inhibits host IFIH1/MDA5, thereby inhibiting the type-I IFN production and the establishment of the antiviral state. Cleaves and inhibits host MAVS, thereby inhibiting the type-I IFN production and the establishment of the antiviral state. In terms of biological role, plays an essential role in the virus replication cycle by acting as a viroporin. Creates a pore in the host endoplasmic reticulum and as a consequence releases Ca2+ in the cytoplasm of infected cell. In turn, high levels of cytoplasmic calcium may trigger membrane trafficking and transport of viral ER-associated proteins to viroplasms, sites of viral genome replication. Induces and associates with structural rearrangements of intracellular membranes. Displays RNA-binding, nucleotide binding and NTPase activities. May play a role in virion morphogenesis and viral RNA encapsidation by interacting with the capsid protein VP3. Its function is as follows. Localizes the viral replication complex to the surface of membranous vesicles. Together with protein 3CD binds the Cis-Active RNA Element (CRE) which is involved in RNA synthesis initiation. Acts as a cofactor to stimulate the activity of 3D polymerase, maybe through a nucleid acid chaperone activity. Functionally, localizes the viral replication complex to the surface of membranous vesicles. It inhibits host cell endoplasmic reticulum-to-Golgi apparatus transport and causes the disassembly of the Golgi complex, possibly through GBF1 interaction. This would result in depletion of MHC, trail receptors and IFN receptors at the host cell surface. Plays an essential role in viral RNA replication by recruiting ACBD3 and PI4KB at the viral replication sites, thereby allowing the formation of the rearranged membranous structures where viral replication takes place. In terms of biological role, acts as a primer for viral RNA replication and remains covalently bound to viral genomic RNA. VPg is uridylylated prior to priming replication into VPg-pUpU. The oriI viral genomic sequence may act as a template for this. The VPg-pUpU is then used as primer on the genomic RNA poly(A) by the RNA-dependent RNA polymerase to replicate the viral genome. During genome replication, the VPg-RNA linkage is removed by the host TDP2, thereby accelerating replication. During the late stage of the replication cycle, host TDP2 is excluded from sites of viral RNA synthesis and encapsidation, allowing for the generation of progeny virions. Involved in the viral replication complex and viral polypeptide maturation. It exhibits protease activity with a specificity and catalytic efficiency that is different from protease 3C. Protein 3CD lacks polymerase activity. Protein 3CD binds to the 5'UTR of the viral genome. Its function is as follows. Replicates the viral genomic RNA on the surface of intracellular membranes. May form linear arrays of subunits that propagate along a strong head-to-tail interaction called interface-I. Covalently attaches UMP to a tyrosine of VPg, which is used to prime RNA synthesis. The positive stranded RNA genome is first replicated at virus induced membranous vesicles, creating a dsRNA genomic replication form. This dsRNA is then used as template to synthesize positive stranded RNA genomes. ss(+)RNA genomes are either translated, replicated or encapsidated. Functionally, major viral protease that mediates proteolytic processing of the polyprotein. Cleaves host EIF5B, contributing to host translation shutoff. Also cleaves host PABPC1, contributing to host translation shutoff. Cleaves host NLRP1, triggers host N-glycine-mediated degradation of the autoinhibitory NLRP1 N-terminal fragment. The sequence is that of Genome polyprotein from Coxsackievirus B6 (strain Schmitt).